We begin with the raw amino-acid sequence, 101 residues long: Trp operon repressor homolog (101 aa).

Residues 59 to 82 (QREIAQKYGVSIAQITRGSNALKA) mediate DNA binding.

This sequence belongs to the TrpR family. As to quaternary structure, homodimer.

The protein localises to the cytoplasm. Functionally, this protein is an aporepressor. When complexed with L-tryptophan it binds the operator region of the trp operon and prevents the initiation of transcription. In Chlamydia caviae (strain ATCC VR-813 / DSM 19441 / 03DC25 / GPIC) (Chlamydophila caviae), this protein is Trp operon repressor homolog.